We begin with the raw amino-acid sequence, 353 residues long: MRNIRKIKVDNMKVSVYGAGNQNLYINKLNLPEKFGGEPPYGGSRMAIEFAEAGHDVVLAEPNKNIMSDDLWKKVEDAGVKVVSDDVEAAKHGEIHVLFTPFGKATFRIAKTIIEHVPENAVICNTCTVSPVVLYYSLEPILRTKRKDVGISSMHPAAVPGTPQHGHYVIGGKTTDGKELATEEQIKKAVELAKSAGKEAYVVPADVSSVVADMGSLVTAVALSGVLDYYTVGRKIINAPKKMIEQQVIMTLQTMASLVETSGIEGMVKALNPELLIRSASSMKLLDRQKDLDAALEILQNLDETLKAEVEKAEIKPTTLVAAQSLVKEIKTLIGGAAAEGAIKRSARKLFEH.

Belongs to the HMD family.

The sequence is that of H(2)-forming methylenetetrahydromethanopterin dehydrogenase-related protein MJ1338 from Methanocaldococcus jannaschii (strain ATCC 43067 / DSM 2661 / JAL-1 / JCM 10045 / NBRC 100440) (Methanococcus jannaschii).